A 213-amino-acid chain; its full sequence is Large ribosomal subunit protein eL14 (213 aa).

K79 carries the N6-acetyllysine modification. N6-acetyllysine; alternate is present on K85. K85 is subject to N6-succinyllysine; alternate. Residue K124 forms a Glycyl lysine isopeptide (Lys-Gly) (interchain with G-Cter in SUMO2) linkage. A Phosphoserine modification is found at S139. The segment at 166–213 (TAGKKAPAQKAPAQKAAGQKAAPPPKAQKVQKPPAQKAPAPKASGEKA) is disordered. The stretch at 169–173 (KKAPA) is one 1-1; approximate repeat. A 4 X 5 AA tandem repeats of Q-K-A-[APS]-X region spans residues 169 to 188 (KKAPAQKAPAQKAAGQKAAP). 5 repeat units span residues 174 to 178 (QKAPA), 179 to 183 (QKAAG), 184 to 188 (QKAAP), 191 to 193 (KAQ), and 194 to 196 (KVQ). A 2 X 3 AA tandem repeats of K-G-Q region spans residues 191 to 196 (KAQKVQ). K202 bears the N6-succinyllysine mark.

This sequence belongs to the eukaryotic ribosomal protein eL14 family. As to quaternary structure, component of the large ribosomal subunit.

It is found in the cytoplasm. Component of the large ribosomal subunit. The ribosome is a large ribonucleoprotein complex responsible for the synthesis of proteins in the cell. This Sus scrofa (Pig) protein is Large ribosomal subunit protein eL14 (RPL14).